The sequence spans 688 residues: Glycine--tRNA ligase beta subunit (688 aa).

The protein belongs to the class-II aminoacyl-tRNA synthetase family. As to quaternary structure, tetramer of two alpha and two beta subunits.

The protein localises to the cytoplasm. The catalysed reaction is tRNA(Gly) + glycine + ATP = glycyl-tRNA(Gly) + AMP + diphosphate. This Aliivibrio salmonicida (strain LFI1238) (Vibrio salmonicida (strain LFI1238)) protein is Glycine--tRNA ligase beta subunit.